Reading from the N-terminus, the 370-residue chain is Homoserine O-acetyltransferase (370 aa).

An AB hydrolase-1 domain is found at 44–350 (NAILVAHAWT…AYGHDAFLLE (307 aa)). Catalysis depends on Ser-150, which acts as the Nucleophile. Residue Arg-217 participates in substrate binding. Active-site residues include Asp-311 and His-344. Asp-345 lines the substrate pocket.

The protein belongs to the AB hydrolase superfamily. MetX family. Homodimer.

The protein localises to the cytoplasm. The enzyme catalyses L-homoserine + acetyl-CoA = O-acetyl-L-homoserine + CoA. The protein operates within amino-acid biosynthesis; L-methionine biosynthesis via de novo pathway; O-acetyl-L-homoserine from L-homoserine: step 1/1. Transfers an acetyl group from acetyl-CoA to L-homoserine, forming acetyl-L-homoserine. The polypeptide is Homoserine O-acetyltransferase (Geotalea uraniireducens (strain Rf4) (Geobacter uraniireducens)).